A 155-amino-acid chain; its full sequence is Small ribosomal subunit protein bS6 (155 aa).

The interval 94 to 155 is disordered; that stretch reads VKQEGPLPTP…TPELEEQVKS (62 aa). Residues 103-112 show a composition bias toward polar residues; that stretch reads PRSSNKSSNQ. Over residues 113-141 the composition is skewed to basic and acidic residues; sequence AEKKENENIDSANKSEPKADETDNKKKIT.

The protein belongs to the bacterial ribosomal protein bS6 family.

Binds together with bS18 to 16S ribosomal RNA. This is Small ribosomal subunit protein bS6 from Prochlorococcus marinus (strain MIT 9515).